A 797-amino-acid polypeptide reads, in one-letter code: Protocadherin beta-11 (797 aa).

Positions 1-26 (MENQGTRTQQIRQVLLLFVLLGMSQA) are cleaved as a signal peptide. Residues 27-690 (GSETWSFSVA…AQADSLTVYL (664 aa)) lie on the Extracellular side of the membrane. Cadherin domains are found at residues 35-133 (VAEE…SPIF), 138-242 (MLLE…SPEF), 247-347 (YEVK…APEI), 352-451 (ITSP…APTF), and 456-561 (YTLF…SPFV). 4 N-linked (GlcNAc...) asparagine glycosylation sites follow: asparagine 418, asparagine 436, asparagine 487, and asparagine 567. The 104-residue stretch at 568-671 (GSAPCTELVP…LVDGFSQPYL (104 aa)) folds into the Cadherin 6 domain. A helical membrane pass occupies residues 691-711 (VVALASVSSLFLFSVLLFVAV). Over 712-797 (RLCRRSRAAS…TFRNSFGFNF (86 aa)) the chain is Cytoplasmic.

The protein resides in the cell membrane. Potential calcium-dependent cell-adhesion protein. May be involved in the establishment and maintenance of specific neuronal connections in the brain. This is Protocadherin beta-11 (PCDHB11) from Homo sapiens (Human).